Reading from the N-terminus, the 416-residue chain is Phosphatidylinositol 5-phosphate 4-kinase type-2 beta (416 aa).

Ser-2 is subject to N-acetylserine. Thr-8 carries the post-translational modification Phosphothreonine. At Ser-19 the chain carries Phosphoserine. Positions 38–415 (ASEPILSVLM…RFNEFMSNIL (378 aa)) constitute a PIPK domain. The tract at residues 64–70 (VMLMPDD) is required for interaction with PIP5K1A. 2 positions are modified to N6-acetyllysine: Lys-94 and Lys-150. Residues 202-204 (RNV) and Lys-214 each bind ATP. GTP is bound by residues 203–204 (NV) and Lys-214. Thr-322 bears the Phosphothreonine mark. The residue at position 326 (Ser-326) is a Phosphoserine. Asp-369 contacts GTP.

Homodimer. Binds TNFRSF1A. Interacts with PIP4K2A; the interaction suppresses ubiquitination by the SPOP/CUL3 complex. Probably interacts with PIP5K1A; the interaction inhibits PIP5K1A kinase activity. Ubiquitinated by the SPOP/CUL3 complex. Ubiquitination is stimulated by PtdIns5P levels. In terms of processing, phosphorylated on serine residues.

The protein resides in the endoplasmic reticulum membrane. The protein localises to the cell membrane. Its subcellular location is the nucleus. It localises to the cytoplasm. The catalysed reaction is a 1,2-diacyl-sn-glycero-3-phospho-(1D-myo-inositol-5-phosphate) + ATP = a 1,2-diacyl-sn-glycero-3-phospho-(1D-myo-inositol-4,5-bisphosphate) + ADP + H(+). It carries out the reaction 1,2-dihexadecanoyl-sn-glycero-3-phospho-(1D-myo-inositol-5-phosphate) + ATP = 1,2-dihexadecanoyl-sn-glycero-3-phospho-(1D-myo-inositol-4,5-bisphosphate) + ADP + H(+). The enzyme catalyses 1,2-dihexadecanoyl-sn-glycero-3-phospho-(1D-myo-inositol-5-phosphate) + GTP = 1,2-dihexadecanoyl-sn-glycero-3-phospho-(1D-myo-inositol-4,5-bisphosphate) + GDP + H(+). Its function is as follows. Participates in the biosynthesis of phosphatidylinositol 4,5-bisphosphate. Preferentially utilizes GTP, rather than ATP, for PI(5)P phosphorylation and its activity reflects changes in direct proportion to the physiological GTP concentration. Its GTP-sensing activity is critical for metabolic adaptation. PIP4Ks negatively regulate insulin signaling through a catalytic-independent mechanism. They interact with PIP5Ks and suppress PIP5K-mediated PtdIns(4,5)P2 synthesis and insulin-dependent conversion to PtdIns(3,4,5)P3. This chain is Phosphatidylinositol 5-phosphate 4-kinase type-2 beta, found in Rattus norvegicus (Rat).